We begin with the raw amino-acid sequence, 549 residues long: Probable protein kinase UbiB (549 aa).

A Protein kinase domain is found at 123–501 (DFNETPLASA…QQQAHKSNYL (379 aa)). Residues 129–137 (LASASISQV) and K152 contribute to the ATP site. Catalysis depends on D287, which acts as the Proton acceptor. Helical transmembrane passes span 498-518 (SNYLLITSAILLICGTLLFNQ) and 520-540 (ATLWSPYVCLISGAALWIIGW).

It belongs to the ABC1 family. UbiB subfamily.

The protein resides in the cell inner membrane. It participates in cofactor biosynthesis; ubiquinone biosynthesis [regulation]. Functionally, is probably a protein kinase regulator of UbiI activity which is involved in aerobic coenzyme Q (ubiquinone) biosynthesis. This Shewanella sp. (strain MR-4) protein is Probable protein kinase UbiB.